A 270-amino-acid polypeptide reads, in one-letter code: Probable 6-oxopurine nucleoside phosphorylase (270 aa).

Phosphate is bound by residues serine 10 and 48 to 49 (RH). Substrate is bound at residue methionine 191. Threonine 192 lines the phosphate pocket. 215–217 (NYA) contributes to the substrate binding site.

It belongs to the PNP/MTAP phosphorylase family. MTAP subfamily. In terms of assembly, homohexamer. Dimer of a homotrimer.

The catalysed reaction is a purine D-ribonucleoside + phosphate = a purine nucleobase + alpha-D-ribose 1-phosphate. The protein operates within purine metabolism; purine nucleoside salvage. Purine nucleoside phosphorylase which is highly specific for 6-oxopurine nucleosides. Cleaves guanosine or inosine to respective bases and sugar-1-phosphate molecules. Involved in purine salvage. This Korarchaeum cryptofilum (strain OPF8) protein is Probable 6-oxopurine nucleoside phosphorylase.